Here is a 115-residue protein sequence, read N- to C-terminus: Ribonuclease P protein component (115 aa).

The protein belongs to the RnpA family. In terms of assembly, consists of a catalytic RNA component (M1 or rnpB) and a protein subunit.

The enzyme catalyses Endonucleolytic cleavage of RNA, removing 5'-extranucleotides from tRNA precursor.. In terms of biological role, RNaseP catalyzes the removal of the 5'-leader sequence from pre-tRNA to produce the mature 5'-terminus. It can also cleave other RNA substrates such as 4.5S RNA. The protein component plays an auxiliary but essential role in vivo by binding to the 5'-leader sequence and broadening the substrate specificity of the ribozyme. This is Ribonuclease P protein component from Staphylococcus epidermidis (strain ATCC 35984 / DSM 28319 / BCRC 17069 / CCUG 31568 / BM 3577 / RP62A).